The following is a 452-amino-acid chain: Molybdate-anion transporter (452 aa).

Transmembrane regions (helical) follow at residues 1–21 (MLLT…VLEF), 45–65 (YDFY…GPYL), 79–99 (IAII…VSAP), 130–150 (FVLI…FSSF), 180–200 (NGGI…WLGL), 201–221 (GPAS…ALVI), 251–271 (VLLL…FIFL), 281–301 (TPLG…SSLY), 316–336 (VLCL…FSTA), 346–366 (LLAF…MGFL), 377–397 (IGVL…GLLV), and 410–430 (MFSL…SLFT).

This sequence belongs to the major facilitator superfamily.

It is found in the cell membrane. Mediates high-affinity intracellular uptake of the rare oligo-element molybdenum. The sequence is that of Molybdate-anion transporter (mfsd5) from Xenopus tropicalis (Western clawed frog).